The following is a 307-amino-acid chain: MGTGLSLSPSYRKATLFEDGAATVGHYTAVQNSKNAKDKNLKRHSIISVLPWKRIVAVSAKKKNSKKGQPNSSYQNNITHLNNENLKKSLSCANLSTFAQPPPAQPPAPPANQLSGSQTGVSSSVKKAPHPSVTSAGTPKRVIVQASTSELLRCLGEFLCRRCYRLKHLSPTDPVLWLRSVDRSLLLQGWQDQGFITPANVVFLYMLCRDVISSEVGSDHELQAVLLTCLYLSYSYVGNEISYPLKPFLVESCKEAFWDRCLSVINLMSSKMLQINADPHYFTQAFSDLKNESGQEDKKRLLLGLDR.

Ser-8 is subject to Phosphoserine; by CDK5. Positions 96 to 136 are disordered; that stretch reads STFAQPPPAQPPAPPANQLSGSQTGVSSSVKKAPHPSVTSA. Residues 100–110 are compositionally biased toward pro residues; that stretch reads QPPPAQPPAPP. Residues 112–125 show a composition bias toward polar residues; the sequence is NQLSGSQTGVSSSV. Residue Thr-138 is modified to Phosphothreonine; by CDK5.

Belongs to the cyclin-dependent kinase 5 activator family. In terms of assembly, heterodimer composed of a catalytic subunit CDK5 and a regulatory subunit CDK5R1 (p25) and macromolecular complex composed of at least CDK5, CDK5R1 (p35) and CDK5RAP1 or CDK5RAP2 or CDK5RAP3. Only the heterodimer shows kinase activity. Interacts with EPHA4 and NGEF; may mediate the activation of NGEF by EPHA4. Interacts with RASGRF2. The complex p35/CDK5 interacts with CLOCK. The p35 form is proteolytically cleaved by calpain, giving rise to the p25 form. P35 has a 5 to 10 fold shorter half-life compared to p25. The conversion results in deregulation of the CDK5 kinase: p25/CDK5 kinase displays an increased and altered tau phosphorylation in comparison to the p35/CDK5 kinase in vivo. Post-translationally, myristoylated. A proper myristoylation signal is essential for the proper distribution of p35. In terms of processing, phosphorylation at Ser-8 and Thr-138 by CDK5 prevents calpain-mediated proteolysis. Ubiquitinated, leading to its degradation: degradation of p35 by proteasome results in down-regulation of CDK5 activity. During this process, CDK5 phosphorylates p35 and induces its ubiquitination and subsequent degradation. Ubiquitinated by the CRL2(FEM1B) complex, which recognizes the -Gly-Leu-Asp-Arg C-degron at the C-terminus, leading to its degradation. As to expression, brain and neuron specific.

The protein localises to the cell membrane. Its subcellular location is the cell projection. It localises to the neuron projection. It is found in the nucleus. The protein resides in the cytoplasm. The protein localises to the perinuclear region. Its subcellular location is the perikaryon. Functionally, p35 is a neuron specific activator of CDK5. The complex p35/CDK5 is required for neurite outgrowth and cortical lamination. Involved in dendritic spine morphogenesis by mediating the EFNA1-EPHA4 signaling. Activator of TPKII. The complex p35/CDK5 participates in the regulation of the circadian clock by modulating the function of CLOCK protein: phosphorylates CLOCK at 'Thr-451' and 'Thr-461' and regulates the transcriptional activity of the CLOCK-BMAL1 heterodimer in association with altered stability and subcellular distribution. This chain is Cyclin-dependent kinase 5 activator 1 (CDK5R1), found in Spermophilus citellus (European ground squirrel).